The primary structure comprises 49 residues: Unknown protein from spot 75 of 2D-PAGE of etiolated coleoptile (49 aa).

The sequence is that of Unknown protein from spot 75 of 2D-PAGE of etiolated coleoptile from Zea mays (Maize).